Here is a 690-residue protein sequence, read N- to C-terminus: Ligand of Numb protein X 2 (690 aa).

The segment at 50 to 88 (CHICLQPLLQPLDTPCGHTFCYKCLRNFLQEKDFCPLDR) adopts an RING-type zinc-finger fold. Positions 198-224 (STWSEEPGLDNPAFEESAGADTTQQPL) are disordered. The NPXY motif motif lies at 208-211 (NPAF). 4 consecutive PDZ domains span residues 233–318 (TIEI…LRER), 339–422 (QVAL…ARPG), 468–554 (HITV…KALE), and 600–688 (DIVL…WPGS). The tract at residues 418 to 455 (IARPGKPQPGNTIREAGNHSSSSQHHTPPPYYSRPSSH) is disordered.

As to quaternary structure, interacts with the phosphotyrosine interaction domain of NUMB.

This Homo sapiens (Human) protein is Ligand of Numb protein X 2 (LNX2).